The sequence spans 567 residues: MSTSVFNRRWAALLLEALTRHGVRHICIAPGSRSTPLTLAAAANPSLVCHTHFDERGLGHLALGLAKASTEPVAVIVTSGTAVANLYPALIEAGLTGERLILLTADRPPELIDCGANQAIRQQGLFASHPTLSVNLPRPTPDISARWLVSTLDSAMAQLQHGALHINCPFAEPLYGGDEQQYADWSASLGDWWQDCHPWLRQTCYPPSLYQPPAQQADWFFWRQKRGVVIAGRMGAQEGRQLTAWAAMLGWPLIGDVLSQTGQPLPCADLWLAHPRAQETLAQAQMVLQFGSSLTSKRLLQWQTACQPQEYWLVDSAPGRLDPANHRGRRIICPVGEWLSRHPAQRRTPWATELAAYSESAQAQVIETLAGQFSEAAVAHQLAELLPDNGQLFVGNSLIVRLIDALGQLPAGYPVYSNRGASGIDGLLSTAAGVQRATAKPTLAIVGDLSALYDLNALALLRQSSAPMVLLVINNNGGQIFSLLPTPEAERQRFYCMPQDVNFEHAAVMFSLGYARPNSWPQLRELAHQCWLRGGTTLIEVQVPPSQGAETLQQLVQQVTLIPQVAP.

Belongs to the TPP enzyme family. MenD subfamily. Homodimer. It depends on Mg(2+) as a cofactor. Mn(2+) serves as cofactor. The cofactor is thiamine diphosphate.

The catalysed reaction is isochorismate + 2-oxoglutarate + H(+) = 5-enolpyruvoyl-6-hydroxy-2-succinyl-cyclohex-3-ene-1-carboxylate + CO2. It participates in quinol/quinone metabolism; 1,4-dihydroxy-2-naphthoate biosynthesis; 1,4-dihydroxy-2-naphthoate from chorismate: step 2/7. The protein operates within quinol/quinone metabolism; menaquinone biosynthesis. Catalyzes the thiamine diphosphate-dependent decarboxylation of 2-oxoglutarate and the subsequent addition of the resulting succinic semialdehyde-thiamine pyrophosphate anion to isochorismate to yield 2-succinyl-5-enolpyruvyl-6-hydroxy-3-cyclohexene-1-carboxylate (SEPHCHC). The chain is 2-succinyl-5-enolpyruvyl-6-hydroxy-3-cyclohexene-1-carboxylate synthase from Yersinia pestis bv. Antiqua (strain Antiqua).